Here is a 629-residue protein sequence, read N- to C-terminus: tRNA uridine 5-carboxymethylaminomethyl modification enzyme MnmG (629 aa).

Residue 13 to 18 (GGGHAG) participates in FAD binding. Residue 273-287 (GPRYCPSIEDKIMRF) participates in NAD(+) binding.

It belongs to the MnmG family. In terms of assembly, homodimer. Heterotetramer of two MnmE and two MnmG subunits. It depends on FAD as a cofactor.

It is found in the cytoplasm. Its function is as follows. NAD-binding protein involved in the addition of a carboxymethylaminomethyl (cmnm) group at the wobble position (U34) of certain tRNAs, forming tRNA-cmnm(5)s(2)U34. The protein is tRNA uridine 5-carboxymethylaminomethyl modification enzyme MnmG of Tolumonas auensis (strain DSM 9187 / NBRC 110442 / TA 4).